Consider the following 827-residue polypeptide: Transcription factor SOX-6 (827 aa).

Over residues 1–10 (MSSKQATSPF) the composition is skewed to polar residues. The segment at 1-51 (MSSKQATSPFACTADGEEAMTQDLTSREKEEGSDQHPASHLPLHPIMHNKP) is disordered. The span at 25-34 (TSREKEEGSD) shows a compositional bias: basic and acidic residues. Thr-119 bears the Phosphothreonine mark. Positions 184–262 (LAEKERQLST…LLQQQIQVQG (79 aa)) form a coiled coil. Disordered regions lie at residues 334–361 (QINP…GHSY) and 379–470 (VSPG…PIGG). A compositionally biased stretch (basic and acidic residues) spans 341–357 (GISDRFGRNLDPSEHGG). Position 399 is a phosphoserine (Ser-399). Thr-401 bears the Phosphothreonine mark. Glycyl lysine isopeptide (Lys-Gly) (interchain with G-Cter in SUMO) cross-links involve residues Lys-404 and Lys-417. 2 stretches are compositionally biased toward polar residues: residues 421-431 (TAQPLNLSSRP) and 439-461 (SPTS…LPNK). A phosphoserine mark is found at Ser-439 and Ser-442. The HMG box DNA-binding region spans 620-688 (IKRPMNAFMV…IHLEKYPNYK (69 aa)). 2 disordered regions span residues 752-772 (TPSP…EPSL) and 786-827 (ASLA…VSAN). Positions 795–808 (NGEDEMEAYDDYED) are enriched in acidic residues.

In terms of assembly, homodimer. Interacts with DAZAP2. May interact with CENPK. Sumoylation inhibits the transcriptional activity. In terms of tissue distribution, highly expressed in testis.

The protein localises to the nucleus. The protein resides in the cytoplasm. Transcription factor that plays a key role in several developmental processes, including neurogenesis, chondrocytes differentiation and cartilage formation. Specifically binds the 5'-AACAAT-3' DNA motif present in enhancers and super-enhancers and promotes expression of genes important for chondrogenesis. Required for overt chondrogenesis when condensed prechondrocytes differentiate into early stage chondrocytes: SOX5 and SOX6 cooperatively bind with SOX9 on active enhancers and super-enhancers associated with cartilage-specific genes, and thereby potentiate SOX9's ability to transactivate. Not involved in precartilaginous condensation, the first step in chondrogenesis, during which skeletal progenitors differentiate into prechondrocytes. Together with SOX5, required to form and maintain a pool of highly proliferating chondroblasts between epiphyses and metaphyses, to form columnar chondroblasts, delay chondrocyte prehypertrophy but promote hypertrophy, and to delay terminal differentiation of chondrocytes on contact with ossification fronts. Binds to the proximal promoter region of the myelin protein MPZ gene, and is thereby involved in the differentiation of oligodendroglia in the developing spinal tube. Binds to the gene promoter of MBP and acts as a transcriptional repressor. In Mus musculus (Mouse), this protein is Transcription factor SOX-6.